A 235-amino-acid polypeptide reads, in one-letter code: Probable transcriptional regulatory protein CFF8240_0424 (235 aa).

It belongs to the TACO1 family.

It is found in the cytoplasm. This chain is Probable transcriptional regulatory protein CFF8240_0424, found in Campylobacter fetus subsp. fetus (strain 82-40).